The following is a 158-amino-acid chain: NAD(P)H-quinone oxidoreductase subunit J, chloroplastic (158 aa).

Belongs to the complex I 30 kDa subunit family. In terms of assembly, NDH is composed of at least 16 different subunits, 5 of which are encoded in the nucleus.

It is found in the plastid. Its subcellular location is the chloroplast thylakoid membrane. The catalysed reaction is a plastoquinone + NADH + (n+1) H(+)(in) = a plastoquinol + NAD(+) + n H(+)(out). It carries out the reaction a plastoquinone + NADPH + (n+1) H(+)(in) = a plastoquinol + NADP(+) + n H(+)(out). Functionally, NDH shuttles electrons from NAD(P)H:plastoquinone, via FMN and iron-sulfur (Fe-S) centers, to quinones in the photosynthetic chain and possibly in a chloroplast respiratory chain. The immediate electron acceptor for the enzyme in this species is believed to be plastoquinone. Couples the redox reaction to proton translocation, and thus conserves the redox energy in a proton gradient. This chain is NAD(P)H-quinone oxidoreductase subunit J, chloroplastic, found in Crucihimalaya wallichii (Rock-cress).